Consider the following 397-residue polypeptide: Sexual differentiation process protein isp7 (397 aa).

The region spanning 255-353 (PTTSIRLLRY…RYTIPFFLQG (99 aa)) is the Fe2OG dioxygenase domain.

It belongs to the iron/ascorbate-dependent oxidoreductase family.

The protein is Sexual differentiation process protein isp7 (isp7) of Schizosaccharomyces pombe (strain 972 / ATCC 24843) (Fission yeast).